A 659-amino-acid chain; its full sequence is UDP-glucuronate:xylan alpha-glucuronosyltransferase 1 (659 aa).

Over residues 1–14 (MANSPAAPAPTTTT) the composition is skewed to low complexity. Residues 1 to 20 (MANSPAAPAPTTTTGGDSRR) form a disordered region. Residues 70–90 (FQIVKLLLFILLSATLFTIIY) form a helical; Signal-anchor for type II membrane protein membrane-spanning segment. Residues Asp416 and Asp418 each coordinate Mn(2+). Residues 416–418 (DAD), 445–447 (NSG), 472–476 (NGGDQ), and 526–531 (HYLGMK) each bind substrate. His526 contacts Mn(2+).

It belongs to the glycosyltransferase 8 family. Glycogenin subfamily. The cofactor is Mn(2+).

Its subcellular location is the golgi apparatus membrane. In terms of biological role, glycosyltransferase required for the addition of both glucuronic acid and 4-O-methylglucuronic acid branches to xylan in stem cell walls. In association with GUX2, is responsible for almost all of the substitutions of the xylan backbone in stem glucuronoxylan. This chain is UDP-glucuronate:xylan alpha-glucuronosyltransferase 1 (GUX1), found in Arabidopsis thaliana (Mouse-ear cress).